The sequence spans 279 residues: Armadillo repeat-containing protein 1 (279 aa).

The ARM repeat unit spans residues 36–78 (GCLPGLILFLDHPSPPVVHSALLALRYLAECRANREKMKGELG). The tract at residues 236–257 (EYLPEDESPSKEQDKAVSRVGS) is disordered. The span at 243–252 (SPSKEQDKAV) shows a compositional bias: basic and acidic residues.

As to quaternary structure, interacts with mitochondrial contact site and cristae organizing system (MICOS) complex components IMMT/MIC60 and MICOS10/MIC10. Interacts with mitochondrial outer membrane sorting assembly machinery (SAM) complex components SAMM50 and MTX1.

The protein localises to the cytoplasm. It localises to the mitochondrion. It is found in the mitochondrion outer membrane. In association with mitochondrial contact site and cristae organizing system (MICOS) complex components and mitochondrial outer membrane sorting assembly machinery (SAM) complex components may regulate mitochondrial dynamics playing a role in determining mitochondrial length, distribution and motility. In Gallus gallus (Chicken), this protein is Armadillo repeat-containing protein 1 (ARMC1).